Here is a 296-residue protein sequence, read N- to C-terminus: Glycine--tRNA ligase alpha subunit (296 aa).

This sequence belongs to the class-II aminoacyl-tRNA synthetase family. Tetramer of two alpha and two beta subunits.

The protein resides in the cytoplasm. It catalyses the reaction tRNA(Gly) + glycine + ATP = glycyl-tRNA(Gly) + AMP + diphosphate. This is Glycine--tRNA ligase alpha subunit from Prochlorococcus marinus (strain SARG / CCMP1375 / SS120).